The primary structure comprises 225 residues: PKHD-type hydroxylase YbiX (225 aa).

In terms of domain architecture, Fe2OG dioxygenase spans 78-177 (TLSTPLFNRY…RVASFMWIQS (100 aa)). The Fe cation site is built by histidine 96, aspartate 98, and histidine 158. A 2-oxoglutarate-binding site is contributed by arginine 168.

It depends on Fe(2+) as a cofactor. L-ascorbate serves as cofactor.

The sequence is that of PKHD-type hydroxylase YbiX from Escherichia coli (strain K12 / DH10B).